We begin with the raw amino-acid sequence, 346 residues long: Cyclin-dependent kinase 2 (346 aa).

Met-1 carries the post-translational modification N-acetylmethionine. Residues 4–334 form the Protein kinase domain; it reads FQKVEKIGEG…AKAALAHPFF (331 aa). Lys-6 is subject to N6-acetyllysine. 10–18 contacts ATP; sequence IGEGTYGVV. Residue Thr-14 is modified to Phosphothreonine. A Phosphotyrosine; by WEE1 modification is found at Tyr-15. The residue at position 19 (Tyr-19) is a Phosphotyrosine. ATP is bound by residues Lys-33, 81–83, and Asp-86; that span reads EFL. Asp-127 acts as the Proton acceptor in catalysis. Residues 129 to 132 and Asp-145 contribute to the ATP site; that span reads KPQN. Positions 132 and 145 each coordinate Mg(2+). Position 160 is a phosphothreonine; by CAK and CCRK (Thr-160). Ser-218 is modified (phosphoserine).

This sequence belongs to the protein kinase superfamily. CMGC Ser/Thr protein kinase family. CDC2/CDKX subfamily. In terms of assembly, found in a complex with CABLES1, CCNA1 and CCNE1. Interacts with CABLES1. Interacts with UHRF2. Part of a complex consisting of UHRF2, CDK2 and CCNE1. Interacts with the Speedy/Ringo proteins SPDYA and SPDYC. Interaction with SPDYA promotes kinase activation via a conformation change that alleviates obstruction of the substrate-binding cleft by the T-loop. Found in a complex with both SPDYA and CDKN1B/KIP1. Binds to RB1 and CDK7. Binding to CDKN1A (p21) leads to CDK2/cyclin E inactivation at the G1-S phase DNA damage checkpoint, thereby arresting cells at the G1-S transition during DNA repair. Associated with PTPN6 and beta-catenin/CTNNB1. Interacts with CACUL1. May interact with CEP63. Interacts with ANKRD17. Interacts with CEBPA (when phosphorylated). Forms a ternary complex with CCNA2 and CDKN1B; CDKN1B inhibits the kinase activity of CDK2 through conformational rearrangements. Interacts with cyclins A, B1, B3, D, or E. Interacts with CDK2AP2. The cofactor is Mg(2+). Phosphorylated at Thr-160 by CDK7 in a CAK complex. Phosphorylation at Thr-160 promotes kinase activity, whereas phosphorylation at Tyr-15 by WEE1 reduces slightly kinase activity. Phosphorylated on Thr-14 and Tyr-15 during S and G2 phases before being dephosphorylated by CDC25A. Post-translationally, nitrosylated after treatment with nitric oxide (DETA-NO).

It is found in the cytoplasm. Its subcellular location is the cytoskeleton. The protein localises to the microtubule organizing center. It localises to the centrosome. The protein resides in the nucleus. It is found in the cajal body. Its subcellular location is the endosome. The catalysed reaction is L-seryl-[protein] + ATP = O-phospho-L-seryl-[protein] + ADP + H(+). It carries out the reaction L-threonyl-[protein] + ATP = O-phospho-L-threonyl-[protein] + ADP + H(+). Phosphorylation at Thr-14 or Tyr-15 inactivates the enzyme, while phosphorylation at Thr-160 activates it. Stimulated by MYC. Inactivated by CDKN1A (p21). Its function is as follows. Serine/threonine-protein kinase involved in the control of the cell cycle; essential for meiosis, but dispensable for mitosis. Phosphorylates CABLES1, CTNNB1, CDK2AP2, ERCC6, NBN, USP37, p53/TP53, NPM1, CDK7, RB1, BRCA2, MYC, NPAT, EZH2. Triggers duplication of centrosomes and DNA. Acts at the G1-S transition to promote the E2F transcriptional program and the initiation of DNA synthesis, and modulates G2 progression; controls the timing of entry into mitosis/meiosis by controlling the subsequent activation of cyclin B/CDK1 by phosphorylation, and coordinates the activation of cyclin B/CDK1 at the centrosome and in the nucleus. Crucial role in orchestrating a fine balance between cellular proliferation, cell death, and DNA repair in embryonic stem cells (ESCs). Activity of CDK2 is maximal during S phase and G2; activated by interaction with cyclin E during the early stages of DNA synthesis to permit G1-S transition, and subsequently activated by cyclin A2 (cyclin A1 in germ cells) during the late stages of DNA replication to drive the transition from S phase to mitosis, the G2 phase. EZH2 phosphorylation promotes H3K27me3 maintenance and epigenetic gene silencing. Cyclin E/CDK2 prevents oxidative stress-mediated Ras-induced senescence by phosphorylating MYC. Involved in G1-S phase DNA damage checkpoint that prevents cells with damaged DNA from initiating mitosis; regulates homologous recombination-dependent repair by phosphorylating BRCA2, this phosphorylation is low in S phase when recombination is active, but increases as cells progress towards mitosis. In response to DNA damage, double-strand break repair by homologous recombination a reduction of CDK2-mediated BRCA2 phosphorylation. Involved in regulation of telomere repair by mediating phosphorylation of NBN. Phosphorylation of RB1 disturbs its interaction with E2F1. NPM1 phosphorylation by cyclin E/CDK2 promotes its dissociation from unduplicated centrosomes, thus initiating centrosome duplication. Cyclin E/CDK2-mediated phosphorylation of NPAT at G1-S transition and until prophase stimulates the NPAT-mediated activation of histone gene transcription during S phase. Required for vitamin D-mediated growth inhibition by being itself inactivated. Involved in the nitric oxide- (NO) mediated signaling in a nitrosylation/activation-dependent manner. USP37 is activated by phosphorylation and thus triggers G1-S transition. CTNNB1 phosphorylation regulates insulin internalization. Phosphorylates FOXP3 and negatively regulates its transcriptional activity and protein stability. Phosphorylates ERCC6 which is essential for its chromatin remodeling activity at DNA double-strand breaks. Acts as a regulator of the phosphatidylinositol 3-kinase/protein kinase B signal transduction by mediating phosphorylation of the C-terminus of protein kinase B (PKB/AKT1 and PKB/AKT2), promoting its activation. The sequence is that of Cyclin-dependent kinase 2 (Cdk2) from Mus musculus (Mouse).